The primary structure comprises 1453 residues: Collagen alpha-1(I) chain (1453 aa).

The N-terminal stretch at 1-22 (MFSFVDSRLLLLIAATVLLTRG) is a signal peptide. The propeptide at 23-151 (EGEEDIQTGS…PPGLGGNFAP (129 aa)) is N-terminal propeptide. The region spanning 31 to 89 (GSCVQDGLTYNDKDVWKPEPCQICVCDSGNILCDEVICEDTSDCPNAEIPFGECCPICP) is the VWFC domain. The tract at residues 98 to 1203 (PESAGVEGPK…PQEKAHDGGR (1106 aa)) is disordered. Basic and acidic residues predominate over residues 106-116 (PKGDTGPRGDR). Positions 131–143 (PGLPGPPGPPGPP) are enriched in pro residues. Position 152 is a pyrrolidone carboxylic acid (Q152). K160 carries the allysine modification. Residues 162–176 (AGVAVPGPMGPAGPR) are compositionally biased toward low complexity. 11 positions are modified to 4-hydroxyproline: P179, P182, P185, P194, P197, P200, P215, P230, P236, P245, and P251. Over residues 187 to 206 (PQGFQGPPGEPGEPGASGPM) the composition is skewed to low complexity. K254 bears the 5-hydroxylysine; alternate mark. Residue K254 is glycosylated (O-linked (Gal...) hydroxylysine; partial). Low complexity predominate over residues 265–284 (AKGQPGPAGPKGEPGSPGEN). Residues P269, P278, P281, P287, P296, P302, P317, P323, P332, and P335 each carry the 4-hydroxyproline modification. Over residues 307–319 (PAGARGNDGAPGA) the composition is skewed to low complexity. Pro residues predominate over residues 320 to 334 (AGPPGPTGPAGPPGF). Low complexity predominate over residues 350-361 (RGSEGPQGSRGE). 8 positions are modified to 4-hydroxyproline: P362, P365, P377, P383, P392, P398, P401, and P416. The segment covering 368-418 (AGAAGPAGNPGADGQPGAKGATGAPGIAGAPGFPGARGPSGPQGPSGAPGP) has biased composition (low complexity). The residue at position 419 (K419) is a 5-hydroxylysine. 4-hydroxyproline occurs at positions 425, 428, 440, 449, 464, 470, 479, and 485. Residues 463 to 482 (EPGPAGLPGPAGERGAPGSR) show a composition bias toward low complexity. At K494 the chain carries 5-hydroxylysine. 4-hydroxyproline is present on residues P497, P503, P512, P518, P524, P533, P536, P545, P554, P560, P572, P581, P584, P590, P593, P611, P629, P635, P641, P647, P653, P659, P671, P680, P692, P704, P707, P713, P719, P728, and P737. A compositionally biased stretch (low complexity) spans 527-581 (KGLTGSPGSPGPDGKTGPPGPAGQDGRPGPAGPPGARGQAGVMGFPGPKGAAGEP). The segment covering 623–664 (QGPAGAPGFQGLPGPAGPPGEAGKPGEQGVPGNAGAPGPAGA) has biased composition (low complexity). Positions 685 to 722 (PRGANGAPGNDGAKGDAGAPGAPGNEGPPGLEGMPGER) are enriched in low complexity. At K740 the chain carries 5-hydroxylysine. A 4-hydroxyproline mark is found at P746, P761, P767, P776, P788, P794, P797, P806, P812, P830, P839, and P848. Residues 800-827 (AGFAGPPGADGQPGAKGETGDAGAKGDA) are compositionally biased toward low complexity. Residues 835–883 (PTGAPGPAGZVGAPGPKGARGSAGPPGATGFPGAAGRVGPPGPSGNIGL) are compositionally biased toward low complexity. 5-hydroxylysine is present on K851. P860 and P866 each carry 4-hydroxyproline. The residue at position 874 (P874) is a 3-hydroxyproline. Residues P875, P884, P887, P908, P911, P917, P920, P926, P935, P953, P962, P965, P971, P986, P992, P998, P1007, and P1013 each carry the 4-hydroxyproline modification. The span at 890-908 (AGKZGSKGPRGETGPAGRP) shows a compositional bias: low complexity. The span at 910 to 920 (EPGPAGPPGPP) shows a compositional bias: pro residues. Positions 985-995 (PPGPMGPPGLA) are enriched in pro residues. The segment covering 997–1021 (PPGEAGREGAPGAEGAPGRDGAAGP) has biased composition (low complexity). Residue K1022 is modified to 5-hydroxylysine; partial. Residues 1031–1046 (AGPPGAPGAPGAPGPV) show a composition bias toward pro residues. 4-hydroxyproline is present on residues P1034, P1037, P1040, and P1067. Over residues 1070–1081 (AGARGPAGPQGP) the composition is skewed to low complexity. Over residues 1082 to 1096 (RGDKGETGEQGDRGM) the composition is skewed to basic and acidic residues. K1085 is subject to 5-hydroxylysine; partial. 5-hydroxylysine; alternate is present on K1097. A glycan (O-linked (Gal...) hydroxylysine; partial) is linked at K1097. 4-hydroxyproline is present on residues P1109, P1112, P1115, P1133, and P1148. The segment covering 1115–1139 (PGEQGPSGASGPAGPRGPPGSAGAA) has biased composition (low complexity). Position 1153 is a 3-hydroxyproline (P1153). Position 1154 is a 4-hydroxyproline (P1154). Residues 1166 to 1181 (VGPPGPPGPPGPPGPP) show a composition bias toward pro residues. P1168 bears the 3-hydroxyproline mark. P1169 bears the 4-hydroxyproline mark. Position 1171 is a 3-hydroxyproline (P1171). 4-hydroxyproline is present on P1172. 3-hydroxyproline is present on P1174. A 4-hydroxyproline mark is found at P1175, P1178, and P1181. K1197 is modified (allysine). Positions 1208 to 1453 (DDANVMRDRD…GIDIGPVCFL (246 aa)) are cleaved as a propeptide — C-terminal propeptide. The Fibrillar collagen NC1 domain occupies 1218 to 1453 (LEVDTTLKSL…GIDIGPVCFL (236 aa)). Cystine bridges form between C1248–C1280, C1288–C1451, and C1359–C1404. Positions 1266, 1268, 1269, 1271, and 1274 each coordinate Ca(2+). N-linked (GlcNAc...) asparagine glycosylation occurs at N1354.

The protein belongs to the fibrillar collagen family. As to quaternary structure, trimers of one alpha 2(I) and two alpha 1(I) chains. In terms of processing, contains mostly 4-hydroxyproline. Proline residues at the third position of the tripeptide repeating unit (G-X-Y) are 4-hydroxylated in some or all of the chains. Contains 3-hydroxyproline. This modification occurs on the first proline residue in the sequence motif Gly-Pro-Hyp, where Hyp is 4-hydroxyproline. Post-translationally, lysine residues at the third position of the tripeptide repeating unit (G-X-Y) are 5-hydroxylated in some or all of the chains. In terms of processing, O-glycosylated on hydroxylated lysine residues. The O-linked glycan consists of a Glc-Gal disaccharide. As to expression, forms the fibrils of tendon, ligaments and bones. In bones the fibrils are mineralized with calcium hydroxyapatite.

Its subcellular location is the secreted. The protein resides in the extracellular space. It is found in the extracellular matrix. Its function is as follows. Type I collagen is a member of group I collagen (fibrillar forming collagen). The protein is Collagen alpha-1(I) chain (COL1A1) of Gallus gallus (Chicken).